A 485-amino-acid chain; its full sequence is Arginine/agmatine antiporter (485 aa).

The next 12 helical transmembrane spans lie at 12-34 (GTIALAGMVVSSIIGGGIFSLPQ), 38-60 (ATAGAGAVILSWILTGFGMFFIA), 89-111 (IGFTIGWGYWLCQIFGNVGYAVI), 126-148 (GGNTLPAILGGSILIWVFNFIVL), 155-177 (SIINVIGTIFKIIPLIIFIILTA), 211-230 (TMLVTLWAFIGIEGAVVMSG), 243-265 (VLGFLGCLTIYILFSLLPFGSLF), 291-313 (VLMNVGLIIAVLSSWLSWTIIVA), 363-385 (WNTMLSITGVMVLPAYLASAAFL), 400-422 (IKAPLAMITGILGVVYSLWLIYA), 427-446 (YLFMALVLLALGIPFYIDAG), and 461-483 (IVGMTFIGLLALTAIFLFSTGRI).

Belongs to the amino acid-polyamine-organocation (APC) superfamily. Basic amino acid/polyamine antiporter (APA) (TC 2.A.3.2) family.

The protein resides in the cell inner membrane. Functionally, catalyzes the exchange of L-arginine for agmatine. The arginine uptake by the bacterium in the macrophage may be a virulence factor against the host innate immune response. The protein is Arginine/agmatine antiporter (aaxC) of Chlamydia pneumoniae (Chlamydophila pneumoniae).